The following is a 353-amino-acid chain: DNA polymerase IV (353 aa).

Positions 6 to 187 (IIHIDCDCFY…LPVTKLHGVG (182 aa)) constitute a UmuC domain. Positions 10 and 105 each coordinate Mg(2+). The active site involves Glu106.

The protein belongs to the DNA polymerase type-Y family. As to quaternary structure, monomer. The cofactor is Mg(2+).

Its subcellular location is the cytoplasm. It carries out the reaction DNA(n) + a 2'-deoxyribonucleoside 5'-triphosphate = DNA(n+1) + diphosphate. In terms of biological role, poorly processive, error-prone DNA polymerase involved in untargeted mutagenesis. Copies undamaged DNA at stalled replication forks, which arise in vivo from mismatched or misaligned primer ends. These misaligned primers can be extended by PolIV. Exhibits no 3'-5' exonuclease (proofreading) activity. May be involved in translesional synthesis, in conjunction with the beta clamp from PolIII. The chain is DNA polymerase IV from Pseudomonas savastanoi pv. phaseolicola (strain 1448A / Race 6) (Pseudomonas syringae pv. phaseolicola (strain 1448A / Race 6)).